The chain runs to 116 residues: Aspartate 1-decarboxylase (116 aa).

Serine 25 functions as the Schiff-base intermediate with substrate; via pyruvic acid in the catalytic mechanism. Serine 25 is subject to Pyruvic acid (Ser). Threonine 57 is a binding site for substrate. The Proton donor role is filled by tyrosine 58. A substrate-binding site is contributed by 72-74; that stretch reads GAA.

Belongs to the PanD family. Heterooctamer of four alpha and four beta subunits. It depends on pyruvate as a cofactor. In terms of processing, is synthesized initially as an inactive proenzyme, which is activated by self-cleavage at a specific serine bond to produce a beta-subunit with a hydroxyl group at its C-terminus and an alpha-subunit with a pyruvoyl group at its N-terminus.

The protein resides in the cytoplasm. The catalysed reaction is L-aspartate + H(+) = beta-alanine + CO2. It functions in the pathway cofactor biosynthesis; (R)-pantothenate biosynthesis; beta-alanine from L-aspartate: step 1/1. In terms of biological role, catalyzes the pyruvoyl-dependent decarboxylation of aspartate to produce beta-alanine. In Helicobacter acinonychis (strain Sheeba), this protein is Aspartate 1-decarboxylase.